The following is a 1023-amino-acid chain: GATOR2 complex protein WDR24 (1023 aa).

7 WD repeats span residues 16–54 (NLGS…FKVT), 64–108 (SLNY…SKSV), 114–154 (DHSR…NASK), 159–199 (PKSE…IAVE), 203–243 (SHQG…SLNN), 245–287 (STIS…IPLF), and 291–329 (DHRD…KPYQ). Positions 563–578 (SKNIIDNSNDSNQEIN) are enriched in low complexity. 2 disordered regions span residues 563-621 (SKNI…EPPS) and 661-824 (QKST…SIEN). A compositionally biased stretch (acidic residues) spans 584–593 (KEDEEEDDDN). Positions 661 to 681 (QKSTDNISDNNSNVHVNIKRQ) are enriched in polar residues. A compositionally biased stretch (low complexity) spans 682–695 (NQPTNNNNNNSNID). Residues 696-742 (NLEKKSNKSKSTKENKESSLTDQNKQKRNDNKEKIDNNEIDNDNKDN) show a composition bias toward basic and acidic residues. The span at 743 to 759 (NDDDDNDVDNIGEDNDE) shows a compositional bias: acidic residues. Residues 760-812 (INNNNDNNNNNNNNNNNNNNNNNNNNNNNNNNNNNNNNKNNNNDNNNNNNINN) are compositionally biased toward low complexity. The C4-type zinc finger occupies 947 to 969 (ACSSCGKSIPQNSIICEKCNKAS). Positions 948, 951, 962, 965, 972, 975, 986, 989, 991, 994, 997, 1010, 1014, 1016, and 1018 each coordinate Zn(2+). The RING-type; atypical zinc-finger motif lies at 970–1021 (SKCSICRLPVKGMWVWCQGCGHGGHLEHMKSWFIDKNQKSCPTGCTHICTPF).

It belongs to the WD repeat WDR24 family. As to quaternary structure, probably part of the GATOR complex.

Its subcellular location is the lysosome membrane. It carries out the reaction S-ubiquitinyl-[E2 ubiquitin-conjugating enzyme]-L-cysteine + [acceptor protein]-L-lysine = [E2 ubiquitin-conjugating enzyme]-L-cysteine + N(6)-ubiquitinyl-[acceptor protein]-L-lysine.. Its pathway is protein modification; protein ubiquitination. As a component of the GATOR complex may function in the amino acid-sensing branch of the TORC1 signaling pathway. In Dictyostelium discoideum (Social amoeba), this protein is GATOR2 complex protein WDR24.